The sequence spans 300 residues: 4-hydroxy-tetrahydrodipicolinate synthase (300 aa).

Thr57 is a pyruvate binding site. The active-site Proton donor/acceptor is Tyr145. The active-site Schiff-base intermediate with substrate is the Lys173. Ile213 serves as a coordination point for pyruvate.

Belongs to the DapA family. Homotetramer; dimer of dimers.

Its subcellular location is the cytoplasm. It catalyses the reaction L-aspartate 4-semialdehyde + pyruvate = (2S,4S)-4-hydroxy-2,3,4,5-tetrahydrodipicolinate + H2O + H(+). It functions in the pathway amino-acid biosynthesis; L-lysine biosynthesis via DAP pathway; (S)-tetrahydrodipicolinate from L-aspartate: step 3/4. Catalyzes the condensation of (S)-aspartate-beta-semialdehyde [(S)-ASA] and pyruvate to 4-hydroxy-tetrahydrodipicolinate (HTPA). This chain is 4-hydroxy-tetrahydrodipicolinate synthase, found in Corynebacterium jeikeium (strain K411).